We begin with the raw amino-acid sequence, 90 residues long: [Phe8]-phyllolitorin (90 aa).

A signal peptide spans Met-1 to Cys-30. Residues Lys-31 to Arg-48 constitute a propeptide that is removed on maturation. Gln-49 is subject to Pyrrolidone carboxylic acid. Met-57 carries the methionine amide modification. A propeptide spanning residues Ser-61–Asp-90 is cleaved from the precursor.

Belongs to the bombesin/neuromedin-B/ranatensin family. As to expression, expressed by the skin glands.

The protein localises to the secreted. This chain is [Phe8]-phyllolitorin, found in Phyllomedusa sauvagei (Sauvage's leaf frog).